Consider the following 141-residue polypeptide: Hemoglobin subunit alpha (141 aa).

One can recognise a Globin domain in the interval Val-1–Arg-141. Ser-3 is modified (phosphoserine). N6-succinyllysine is present on Lys-7. Thr-8 carries the post-translational modification Phosphothreonine. An N6-succinyllysine modification is found at Lys-11. Lys-16 is modified (N6-acetyllysine; alternate). Residue Lys-16 is modified to N6-succinyllysine; alternate. At Tyr-24 the chain carries Phosphotyrosine. A Phosphoserine modification is found at Ser-35. Residue Lys-40 is modified to N6-succinyllysine. Ser-49 is modified (phosphoserine). His-58 provides a ligand contact to O2. His-87 is a heme b binding site. At Ser-102 the chain carries Phosphoserine. The residue at position 108 (Thr-108) is a Phosphothreonine. Phosphoserine is present on residues Ser-124 and Ser-131. Thr-134 and Thr-137 each carry phosphothreonine. Ser-138 is subject to Phosphoserine.

Belongs to the globin family. Heterotetramer of two alpha chains and two beta chains. As to expression, red blood cells.

Involved in oxygen transport from the lung to the various peripheral tissues. Functionally, hemopressin acts as an antagonist peptide of the cannabinoid receptor CNR1. Hemopressin-binding efficiently blocks cannabinoid receptor CNR1 and subsequent signaling. The sequence is that of Hemoglobin subunit alpha (HBA) from Urocitellus parryii (Arctic ground squirrel).